A 371-amino-acid polypeptide reads, in one-letter code: MVLANKTTASTRSGAGRNLYWLLLLCLSGVALATDIYSGRIDTPALTIVAPLWTSTLVVTLLGFWAVPMLRSLKASQVIQEDGPQSHLKKAGTPTMGGIFFMPVALVLGWAWVAANSVNLLEVSAAVLLTLCLGLVGWFDDWQILRKKSNKGISAKLRLGIELGSGLIFGLWLFLTRSDISGLALPFGLSLPIGVLFLAISTFVVAAESNAVNLTDGMDGLAAGTSAIAFLGLALVVAPSWPGLMIFCACFSGSCLGFLAHNHNPAQVFMGDTGSLALGGALAAVGLITNTLWALLILSGLFLVESLSVIAQVTYYKATKGPDGVGKRLFKMSPIHHHFEQSGWPEVRVVSTFYACVAVLAVAACGLNALS.

9 consecutive transmembrane segments (helical) span residues 19 to 39 (LYWL…IYSG), 48 to 68 (IVAP…WAVP), 95 to 115 (TMGG…WVAA), 119 to 139 (NLLE…VGWF), 155 to 175 (AKLR…WLFL), 180 to 200 (ISGL…FLAI), 227 to 247 (AIAF…LMIF), 284 to 304 (AVGL…LFLV), and 349 to 369 (VVST…GLNA).

Belongs to the glycosyltransferase 4 family. MraY subfamily. The cofactor is Mg(2+).

It is found in the cell inner membrane. The catalysed reaction is UDP-N-acetyl-alpha-D-muramoyl-L-alanyl-gamma-D-glutamyl-meso-2,6-diaminopimeloyl-D-alanyl-D-alanine + di-trans,octa-cis-undecaprenyl phosphate = di-trans,octa-cis-undecaprenyl diphospho-N-acetyl-alpha-D-muramoyl-L-alanyl-D-glutamyl-meso-2,6-diaminopimeloyl-D-alanyl-D-alanine + UMP. The protein operates within cell wall biogenesis; peptidoglycan biosynthesis. Its function is as follows. Catalyzes the initial step of the lipid cycle reactions in the biosynthesis of the cell wall peptidoglycan: transfers peptidoglycan precursor phospho-MurNAc-pentapeptide from UDP-MurNAc-pentapeptide onto the lipid carrier undecaprenyl phosphate, yielding undecaprenyl-pyrophosphoryl-MurNAc-pentapeptide, known as lipid I. The protein is Phospho-N-acetylmuramoyl-pentapeptide-transferase of Acaryochloris marina (strain MBIC 11017).